A 164-amino-acid polypeptide reads, in one-letter code: UPF0304 protein YfbU (164 aa).

The protein belongs to the UPF0304 family.

This chain is UPF0304 protein YfbU, found in Escherichia coli O139:H28 (strain E24377A / ETEC).